Reading from the N-terminus, the 305-residue chain is Protoheme IX farnesyltransferase (305 aa).

A run of 9 helical transmembrane segments spans residues 28–48, 52–72, 102–122, 123–143, 150–170, 176–196, 221–241, 243–263, and 282–302; these read VVLLMLLTAIVGMCLASPGIV, VFLFGNLGIALAASSAAAINH, IFAAILCILSMIILIAFVNLL, TALLTFITLIGYAGFYTLYLK, IVIGGLAGAAPPLLGWVAVTG, ALILLLIIFLWTPPHFWALAI, INILLYTLLLTAISFLPFVIM, SGWIYFSSVCLLNLGFLYWAI, and IWYLMLLFTALLVDHYVYLAL.

It belongs to the UbiA prenyltransferase family. Protoheme IX farnesyltransferase subfamily.

The protein localises to the cell inner membrane. It catalyses the reaction heme b + (2E,6E)-farnesyl diphosphate + H2O = Fe(II)-heme o + diphosphate. The protein operates within porphyrin-containing compound metabolism; heme O biosynthesis; heme O from protoheme: step 1/1. Functionally, converts heme B (protoheme IX) to heme O by substitution of the vinyl group on carbon 2 of heme B porphyrin ring with a hydroxyethyl farnesyl side group. The chain is Protoheme IX farnesyltransferase from Coxiella burnetii (strain CbuK_Q154) (Coxiella burnetii (strain Q154)).